The sequence spans 328 residues: Nucleotide-binding protein BL0705 (328 aa).

Residues 1-35 form a disordered region; that stretch reads MNQQTTNRDTGEAAATNAPANSATSTSTPDNQPTP. Residues 13-29 show a composition bias toward low complexity; the sequence is AAATNAPANSATSTSTP. 46 to 53 lines the ATP pocket; it reads GMSGAGRS. 101-104 contacts GTP; sequence DVRS.

Belongs to the RapZ-like family.

Its function is as follows. Displays ATPase and GTPase activities. The chain is Nucleotide-binding protein BL0705 from Bifidobacterium longum (strain NCC 2705).